The following is a 225-amino-acid chain: Superantigen-like protein 11 (225 aa).

A signal peptide spans 1 to 30 (MKLKNIAKASLALGILTTGMITTTAQPVKA). The interval 94–196 (VDIFVVRENS…RITMKDGGFY (103 aa)) is sialyl Lewis X-binding.

This sequence belongs to the staphylococcal/streptococcal toxin family. As to quaternary structure, homodimer (via its C-terminal domain). Interacts with host FCAR and SELPLG (via sialyl Lewis X).

The protein localises to the secreted. In terms of biological role, secreted protein that plays a role in the inhibition of host immune system. Targets myeloid cells such as monocytes or granulocytes through binding with sialyllactosamine-containing glycoproteins. Prevents initial rolling of neutrophils toward the site of infection by interacting with host SELPLG. Disrupts neutrophil motility by induction of cell adhesion via interacting with glycans but independently of SELPLG. In Staphylococcus aureus (strain Newman), this protein is Superantigen-like protein 11.